A 101-amino-acid chain; its full sequence is Protein translation factor SUI1 homolog (101 aa).

It belongs to the SUI1 family.

This chain is Protein translation factor SUI1 homolog, found in Methanosphaera stadtmanae (strain ATCC 43021 / DSM 3091 / JCM 11832 / MCB-3).